The primary structure comprises 706 residues: Centrosomal protein kizuna (706 aa).

A coiled-coil region spans residues Gln63 to Lys113. The span at Thr105 to Ser116 shows a compositional bias: basic residues. Disordered regions lie at residues Thr105–His184, Val215–Gly347, Glu571–Val603, Ser620–Pro665, and Glu677–Asp706. A compositionally biased stretch (basic and acidic residues) spans Gly118 to Ser127. 2 stretches are compositionally biased toward polar residues: residues Arg128–Ala156 and His164–Gly180. Over residues Val215–Val251 the composition is skewed to basic and acidic residues. Positions Thr272–Ser283 are enriched in low complexity. Positions Gly293–Asp304 are enriched in acidic residues. Residues Pro308–Ile320 show a composition bias toward polar residues. A compositionally biased stretch (acidic residues) spans Glu586–Ala598. A compositionally biased stretch (basic and acidic residues) spans Pro638 to Val648.

It belongs to the kizuna family.

It localises to the cytoplasm. The protein localises to the cytoskeleton. The protein resides in the microtubule organizing center. It is found in the centrosome. Its subcellular location is the cilium basal body. In terms of biological role, centrosomal protein required for establishing a robust mitotic centrosome architecture that can endure the forces that converge on the centrosomes during spindle formation. Required for stabilizing the expanded pericentriolar material around the centriole. The polypeptide is Centrosomal protein kizuna (kiz) (Danio rerio (Zebrafish)).